We begin with the raw amino-acid sequence, 502 residues long: Intracellular exo-alpha-(1-&gt;5)-L-arabinofuranosidase (502 aa).

Residues Glu-29, Asn-74, and Asn-174 each contribute to the alpha-L-arabinofuranose site. Glu-175 acts as the Proton donor/acceptor in catalysis. Alpha-L-arabinofuranose-binding residues include Tyr-246, Glu-294, and Gln-351. Glu-294 (nucleophile) is an active-site residue.

Belongs to the glycosyl hydrolase 51 family. As to quaternary structure, homohexamer; trimer of dimers.

It is found in the cytoplasm. The catalysed reaction is Hydrolysis of terminal non-reducing alpha-L-arabinofuranoside residues in alpha-L-arabinosides.. It functions in the pathway glycan metabolism; L-arabinan degradation. Its activity is regulated as follows. Strongly inhibited by Hg(2+). Involved in the degradation of arabinan and is a key enzyme in the complete degradation of the plant cell wall. Catalyzes the cleavage of terminal alpha-(1-&gt;5)-arabinofuranosyl bonds in different hemicellulosic homopolysaccharides (branched and debranched arabinans). It acts preferentially on aryl-alpha-L-arabinofuranosides, and is much less effective on aryl-beta-D-xylopyranosides. This chain is Intracellular exo-alpha-(1-&gt;5)-L-arabinofuranosidase (abfA), found in Geobacillus stearothermophilus (Bacillus stearothermophilus).